The primary structure comprises 429 residues: MGTIQTLPGTRDILPEEIGYWQYVETITTEILSRAMYQEIRAPIFEQTSLFERGIGEATDVVGKEMYTFKDRGDRSVTLRPEGTAGVVRAYLQNNLYATGGVQRLWYQGPMFRYERPQAGRQRQFHQIGLELLGSGDPRADVEVIALATDILKKLGLQSLKLDLNSVGDRNDRQRYREALVNYFLPYKNELDPDSQDRLERNPLRILDSKNQRTKEINQNAPSILQYLGDQSKKHFDQVQQLLTDLNISYQLNPCLVRGLDYYTHTAFEIQSDDLGAQATVCGGGRYDGLVAELGGPDTPAVGWAIGMERLIILLKQRQTVPHCVPDIYIVSKGEQAEAQALILAQKLRFEGLTVELDLSGSAFGKQFKRADRSGAIACIVLGDEEAGTQTLQLKWLATKQQETLDQTQLVSEIGELKAQLARHKQATG.

The protein belongs to the class-II aminoacyl-tRNA synthetase family. As to quaternary structure, homodimer.

The protein resides in the cytoplasm. It catalyses the reaction tRNA(His) + L-histidine + ATP = L-histidyl-tRNA(His) + AMP + diphosphate + H(+). In Rippkaea orientalis (strain PCC 8801 / RF-1) (Cyanothece sp. (strain PCC 8801)), this protein is Histidine--tRNA ligase.